A 272-amino-acid polypeptide reads, in one-letter code: MGTLTTSLVVPSKLNNEQQSSIFIHKTRRKCKKNQSIVPVARLFGPAIFEASKLKVLFLGVDEEKHPGKLPRTYTLTHSDITSKLTLAISQTINNSQLQGWYNRLQRDEVVAEWKKVKGKMSLHVHCHISGGHFMLDLFARLRNYIFCKELPVVLKAFVHGDENLLRNYPELQEALVWVYFHSNIQEFNKVECWGPLRDATSPSSSSGGVGGVKSTSFTSNSNKKWELPKPCEEACACCFPPVSVMPWLSSNLDGVGEENGTIQQGLQEQQS.

The N-terminal 50 residues, 1 to 50 (MGTLTTSLVVPSKLNNEQQSSIFIHKTRRKCKKNQSIVPVARLFGPAIFE), are a transit peptide targeting the chloroplast. Residues 201-222 (TSPSSSSGGVGGVKSTSFTSNS) form a disordered region.

The protein belongs to the staygreen family. Interacts with PSY1.

It is found in the plastid. Its subcellular location is the chloroplast. Functionally, required to trigger chlorophyll degradation during leaf senescence and fruit ripening. Binds directly PSY1 to regulate the accumulation of lycopene and beta-carotene in the maturing fruits. This chain is Protein STAY-GREEN 1, chloroplastic, found in Solanum lycopersicum (Tomato).